The chain runs to 339 residues: Ornithine utilization regulator (339 aa).

An HTH araC/xylS-type domain is found at 241-338; sequence TRVRRLLLAR…GKLPSDYREA (98 aa). 2 DNA-binding regions (H-T-H motif) span residues 258 to 279 and 305 to 328; these read EQAARELHTSGRSLRRHLSSLG and LYEIALLLGFNDSSNFRRAFRKWT.

In terms of biological role, probably activates the ArgJ gene that encodes ornithine acetyltransferase. Binds to its own promoter-operator region. Probably binds ornithine. The sequence is that of Ornithine utilization regulator (oruR) from Pseudomonas aeruginosa (strain ATCC 15692 / DSM 22644 / CIP 104116 / JCM 14847 / LMG 12228 / 1C / PRS 101 / PAO1).